A 319-amino-acid polypeptide reads, in one-letter code: Beta-ketoacyl-[acyl-carrier-protein] synthase III (319 aa).

Catalysis depends on residues Cys-113 and His-246. The ACP-binding stretch occupies residues 247–251 (QANIR). Asn-276 is a catalytic residue.

Belongs to the thiolase-like superfamily. FabH family. Homodimer.

The protein localises to the cytoplasm. The enzyme catalyses malonyl-[ACP] + acetyl-CoA + H(+) = 3-oxobutanoyl-[ACP] + CO2 + CoA. Its pathway is lipid metabolism; fatty acid biosynthesis. In terms of biological role, catalyzes the condensation reaction of fatty acid synthesis by the addition to an acyl acceptor of two carbons from malonyl-ACP. Catalyzes the first condensation reaction which initiates fatty acid synthesis and may therefore play a role in governing the total rate of fatty acid production. Possesses both acetoacetyl-ACP synthase and acetyl transacylase activities. Its substrate specificity determines the biosynthesis of branched-chain and/or straight-chain of fatty acids. In Ehrlichia canis (strain Jake), this protein is Beta-ketoacyl-[acyl-carrier-protein] synthase III.